The chain runs to 606 residues: Serine/threonine-protein kinase A-Raf (606 aa).

An RBD domain is found at 19 to 91 (GTVKVYLPNK…DGEELIVEVL (73 aa)). The Phorbol-ester/DAG-type zinc-finger motif lies at 98-144 (MHNFVRKTFFSLAFCDFCLKFLFHGFRCQTCGYKFHQHCSSKVPTVC). Residues His99, Cys112, Cys115, Cys125, Cys128, His133, Cys136, and Cys144 each coordinate Zn(2+). Residues Ser157 and Ser162 each carry the phosphoserine modification. Disordered regions lie at residues 158–207 (VQDL…NAPL) and 241–290 (TDAA…DKKK). Thr181 is subject to Phosphothreonine. A phosphoserine mark is found at Ser186, Ser257, and Ser269. Residues 254-267 (PRGSPSPASVSSGR) are compositionally biased toward low complexity. The segment covering 274–289 (SPSEQRERKSLADDKK) has biased composition (basic and acidic residues). Residues 310–570 (VQLLKRIGTG…PQILATIELL (261 aa)) form the Protein kinase domain. ATP contacts are provided by residues 316-324 (IGTGSFGTV) and Lys336. Thr318 carries the phosphothreonine modification. The active-site Proton acceptor is the Asp429.

Belongs to the protein kinase superfamily. TKL Ser/Thr protein kinase family. RAF subfamily. As to quaternary structure, interacts with TH1L/NELFD. Requires Zn(2+) as cofactor. Dephosphorylation by the SHOC2-MRAS-PP1c (SMP) complex consisting of SHOC2, GTP-bound M-Ras/MRAS and the catalytic subunit of protein phosphatase 1 (PPP1CA, PPP1CB or PPP1CC); this relieves inactivation and stimulates kinase activity.

It catalyses the reaction L-seryl-[protein] + ATP = O-phospho-L-seryl-[protein] + ADP + H(+). The enzyme catalyses L-threonyl-[protein] + ATP = O-phospho-L-threonyl-[protein] + ADP + H(+). Functionally, involved in the transduction of mitogenic signals from the cell membrane to the nucleus. May also regulate the TOR signaling cascade. Phosphorylates PFKFB2. This chain is Serine/threonine-protein kinase A-Raf (ARAF), found in Sus scrofa (Pig).